A 52-amino-acid chain; its full sequence is Repressor-like protein SSo7c3 (52 aa).

The SpoVT-AbrB domain occupies 4–51 (EEVVKVSRNYQVTIPAKVRQKFPVKEGDLVKVIYDENGGVVKIQILDS).

The sequence is that of Repressor-like protein SSo7c3 from Saccharolobus solfataricus (strain ATCC 35092 / DSM 1617 / JCM 11322 / P2) (Sulfolobus solfataricus).